The chain runs to 95 residues: 6 kDa early secretory antigenic target (95 aa).

Helical transmembrane passes span 11–43 (IEAA…AAAW) and 49–85 (EAYQ…AMAS). A coiled-coil region spans residues 56-87 (QKWDATATELNNALQNLARTISEAGQAMASTE).

It belongs to the WXG100 family. ESAT-6 subfamily. In terms of assembly, forms a tight 1:1 complex with EsxB (CFP-10).

The protein localises to the secreted. The protein resides in the host membrane. A secreted protein. Acts as a strong host T-cell antigen. Plays a number of roles in modulating the host's immune response to infection as well as being responsible for bacterial escape into the host cytoplasm. The polypeptide is 6 kDa early secretory antigenic target (esxA) (Mycobacterium bovis (strain ATCC BAA-935 / AF2122/97)).